The primary structure comprises 449 residues: Glucose-6-phosphate isomerase (449 aa).

Glu-291 functions as the Proton donor in the catalytic mechanism. Residues His-312 and Lys-426 contribute to the active site.

The protein belongs to the GPI family.

It localises to the cytoplasm. The enzyme catalyses alpha-D-glucose 6-phosphate = beta-D-fructose 6-phosphate. It participates in carbohydrate biosynthesis; gluconeogenesis. Its pathway is carbohydrate degradation; glycolysis; D-glyceraldehyde 3-phosphate and glycerone phosphate from D-glucose: step 2/4. In terms of biological role, catalyzes the reversible isomerization of glucose-6-phosphate to fructose-6-phosphate. The sequence is that of Glucose-6-phosphate isomerase from Streptococcus pneumoniae serotype 4 (strain ATCC BAA-334 / TIGR4).